The chain runs to 689 residues: MTHQTFLVEIGTEELPPKSLRSLVESFAFYLTQELNKAHLDHGEVTWFATPRRLAVKVACLSTIQKDQKIEKRGPAIAQAYDVDGNPTKAATAWARSCGISLDQAKSLVTDKGEWLLYSWVLPGKSASSLLAEKVKIALSQLPISKLMSWGIHEAKFVRPVHTVTLLLGDELISGIIFGVNSNRKILGHRFMGEPSFIIEHADQYPQILLEKGKVMADFFLRKTQIKTDIEKAAEKIGAIADISDNLLEEVTSLVEWPVVHTAQFEKKFLEVPSEALVHTMKNDQKYFPVYNKSGQLMPYFIFVANILSQDPPQLIFGNEKVIRPRFADAQFFFETDLKQSLEERLPSLKTILFQKELGTLYEKVQRVQALSGWIASQIGANVEYSIKAGLLSKSDLMTNMVCEFPETQGIMGMHYARYHHEPDEVARAIYEQYQPRFSGDNLPSTLVACSVAIADKMDTLTGIFGINQLPKGDKDPFGLRRAALGVLRIIVEKNLPLDLQTLISEAVRLYGNKLKNSNLIDQIIEFMLGRFRSWYQEAGHGIDSIQAVLARRPTKPADFNARIQAVTYFRTMNEARALCASNKRVSNILSQSLDIPKNSIDTGLLKEPAEIELAQNILELEKKLAPFFVAGLYKDALLELVALREPLDIFFKQVMVMVPDQDLRLNRLALLNKLRALFLRVADISFLQ.

The protein belongs to the class-II aminoacyl-tRNA synthetase family. In terms of assembly, tetramer of two alpha and two beta subunits.

It localises to the cytoplasm. The enzyme catalyses tRNA(Gly) + glycine + ATP = glycyl-tRNA(Gly) + AMP + diphosphate. The protein is Glycine--tRNA ligase beta subunit of Hamiltonella defensa subsp. Acyrthosiphon pisum (strain 5AT).